Here is a 328-residue protein sequence, read N- to C-terminus: MNSPQNVSTKKVTVTGAAGQISYSLLWRIANGEVFGTDTPVELKLLEIPQALGGAEGVAMELLDSAFPLLRNITITADANEAFDGANAAFLVGAKPRGKGEERADLLANNGKIFGPQGKAINDNAADDIRVLVVGNPANTNALIASAAAPDVPASRFNAMMRLDHNRAISQLATKLGRGSAEFNNIVVWGNHSATQFPDITYATVGGEKVTDLVDHDWYVEEFIPRVANRGAEIIEVRGKSSAASAASSAIDHMRDWVQGTEAWSSAAIPSTGAYGIPEGIFVGLPTVSRNGEWEIVEGLEISDFQRARIDANAQELQAEREAVRDLL.

16–22 provides a ligand contact to NAD(+); sequence GAAGQIS. Residues Arg97 and Arg103 each coordinate substrate. NAD(+)-binding positions include Asn110, Gln117, and 134-136; that span reads VGN. 2 residues coordinate substrate: Asn136 and Arg167. The active-site Proton acceptor is His192.

This sequence belongs to the LDH/MDH superfamily. MDH type 2 family. As to quaternary structure, homotetramer.

The enzyme catalyses (S)-malate + NAD(+) = oxaloacetate + NADH + H(+). With respect to regulation, citrate activates the enzyme in the oxidation of malate to oxaloacetate and inhibits it in the reverse reaction. Its function is as follows. Catalyzes the reversible oxidation of malate to oxaloacetate. Exhibits higher catalytic efficiency for oxaloacetate reduction than for malate oxidation in vitro. Almost equally active both for NADH and NADPH on the bases of the kcat values at pH 6.5, but catalytic efficiency for oxaloacetate reduction is 50-fold higher with NADH. The chain is Malate dehydrogenase from Corynebacterium glutamicum (strain ATCC 13032 / DSM 20300 / JCM 1318 / BCRC 11384 / CCUG 27702 / LMG 3730 / NBRC 12168 / NCIMB 10025 / NRRL B-2784 / 534).